The sequence spans 299 residues: GTPase Era (299 aa).

The Era-type G domain occupies 4 to 171 (KSGFVAILGR…VDILSENLEE (168 aa)). Residues 12–19 (GRPNVGKS) are G1. 12–19 (GRPNVGKS) serves as a coordination point for GTP. The G2 stretch occupies residues 38-42 (QTTRN). A G3 region spans residues 59 to 62 (DTPG). GTP is bound by residues 59 to 63 (DTPGI) and 121 to 124 (NKID). The interval 121–124 (NKID) is G4. The segment at 150–152 (ISA) is G5. One can recognise a KH type-2 domain in the interval 202 to 280 (TREEIPHSVA…FLETWVKVKK (79 aa)).

It belongs to the TRAFAC class TrmE-Era-EngA-EngB-Septin-like GTPase superfamily. Era GTPase family. As to quaternary structure, monomer.

The protein resides in the cytoplasm. Its subcellular location is the cell membrane. Its function is as follows. An essential GTPase that binds both GDP and GTP, with rapid nucleotide exchange. Plays a role in 16S rRNA processing and 30S ribosomal subunit biogenesis and possibly also in cell cycle regulation and energy metabolism. The chain is GTPase Era from Streptococcus gordonii (strain Challis / ATCC 35105 / BCRC 15272 / CH1 / DL1 / V288).